A 487-amino-acid polypeptide reads, in one-letter code: Argininosuccinate lyase (487 aa).

This sequence belongs to the lyase 1 family. Argininosuccinate lyase subfamily.

The protein localises to the cytoplasm. The catalysed reaction is 2-(N(omega)-L-arginino)succinate = fumarate + L-arginine. It participates in amino-acid biosynthesis; L-arginine biosynthesis; L-arginine from L-ornithine and carbamoyl phosphate: step 3/3. This chain is Argininosuccinate lyase, found in Methanococcus aeolicus (strain ATCC BAA-1280 / DSM 17508 / OCM 812 / Nankai-3).